The sequence spans 358 residues: B3 domain-containing transcription factor NGA3 (358 aa).

Residues 1–14 are compositionally biased toward polar residues; that stretch reads MDLSLAPTTTTSSD. The interval 1–45 is disordered; it reads MDLSLAPTTTTSSDQEQDRDQELTSNIGASSSSGPSGNNNNLPMM. Residues 25 to 45 are compositionally biased toward low complexity; that stretch reads SNIGASSSSGPSGNNNNLPMM. A DNA-binding region (TF-B3) is located at residues 56–162; sequence FDKVVTPSDV…KLYIDWRHRP (107 aa). Residues 310–358 are disordered; that stretch reads EIGASSSSSSALRLNLSTDHDDDNDDGDDGDDDQFAKKGKSSLSLNFNP. Over residues 329 to 342 the composition is skewed to acidic residues; it reads HDDDNDDGDDGDDD.

Its subcellular location is the nucleus. Regulates lateral organ growth. Functionally redundant with NGA1, NGA2 and NGA4. The polypeptide is B3 domain-containing transcription factor NGA3 (NGA3) (Arabidopsis thaliana (Mouse-ear cress)).